Consider the following 75-residue polypeptide: Large ribosomal subunit protein bL31 (75 aa).

This sequence belongs to the bacterial ribosomal protein bL31 family. Type A subfamily. In terms of assembly, part of the 50S ribosomal subunit.

Its function is as follows. Binds the 23S rRNA. This chain is Large ribosomal subunit protein bL31, found in Chlorobium limicola (strain DSM 245 / NBRC 103803 / 6330).